The following is a 260-amino-acid chain: Deoxyribonuclease-1 (260 aa).

Asparagine 18 carries N-linked (GlcNAc...) asparagine glycosylation. Residue glutamate 78 is part of the active site. Cysteine 101 and cysteine 104 are disulfide-bonded. Residue histidine 134 is part of the active site. A disulfide bridge connects residues cysteine 173 and cysteine 209.

Belongs to the DNase I family. Ca(2+) is required as a cofactor. Mg(2+) serves as cofactor.

Its subcellular location is the secreted. It localises to the zymogen granule. The protein resides in the nucleus envelope. It carries out the reaction Endonucleolytic cleavage to 5'-phosphodinucleotide and 5'-phosphooligonucleotide end-products.. In terms of biological role, serum endocuclease secreted into body fluids by a wide variety of exocrine and endocrine organs. Expressed by non-hematopoietic tissues and preferentially cleaves protein-free DNA. Among other functions, seems to be involved in cell death by apoptosis. Binds specifically to G-actin and blocks actin polymerization. Together with DNASE1L3, plays a key role in degrading neutrophil extracellular traps (NETs). NETs are mainly composed of DNA fibers and are released by neutrophils to bind pathogens during inflammation. Degradation of intravascular NETs by DNASE1 and DNASE1L3 is required to prevent formation of clots that obstruct blood vessels and cause organ damage following inflammation. This chain is Deoxyribonuclease-1 (DNASE1), found in Ovis aries (Sheep).